Consider the following 487-residue polypeptide: UPF0276 protein SAV_2218 (487 aa).

A UPF0276 region spans residues 1–285 (MVEEGTMERL…LGAIRKTLEK (285 aa)). Positions 286 to 487 (AGTRAGASAG…RATRRVLLRR (202 aa)) are unknown. The segment at 319–348 (AGPRRGGADAQAAPRAAGTEALSAASTSTP) is disordered. Over residues 326–348 (ADAQAAPRAAGTEALSAASTSTP) the composition is skewed to low complexity.

This sequence in the N-terminal section; belongs to the UPF0276 family.

The protein is UPF0276 protein SAV_2218 of Streptomyces avermitilis (strain ATCC 31267 / DSM 46492 / JCM 5070 / NBRC 14893 / NCIMB 12804 / NRRL 8165 / MA-4680).